We begin with the raw amino-acid sequence, 868 residues long: Facilitated trehalose transporter Tret1 (868 aa).

Disordered regions lie at residues 1-213 (MSGR…QKAT) and 257-314 (KESS…LIHR). At 1–403 (MSGRDNRGAG…VYRPTTNPIY (403 aa)) the chain is on the cytoplasmic side. Basic and acidic residues predominate over residues 25–43 (KLKEKLTRAGDDQGYHRVE). Composition is skewed to low complexity over residues 44 to 57 (SNLS…SLDT), 79 to 91 (PQQQ…QQLR), and 117 to 126 (PFQQQQQRTP). 2 stretches are compositionally biased toward basic and acidic residues: residues 146–155 (EIREHRDRQQ) and 257–290 (KESS…KLDK). Serine 259, serine 260, serine 261, serine 331, and serine 333 each carry phosphoserine. Residues 335–367 (EDFHTSRQHFQQQRSISTDSRKSRRPYEMDEMG) form a disordered region. The segment covering 342 to 352 (QHFQQQRSIST) has biased composition (polar residues). A compositionally biased stretch (basic and acidic residues) spans 353–367 (DSRKSRRPYEMDEMG). A helical membrane pass occupies residues 404-424 (IWTQVLAALSVSLGSLVVGFV). At 425–451 (SAYTSPALVSMTNRNMTSFEVTPQAAS) the chain is on the extracellular side. Asparagine 439 carries an N-linked (GlcNAc...) asparagine glycan. A helical membrane pass occupies residues 452–472 (WVGGIMPLAGLAGGIAGGPFI). Residues 473-484 (EYLGRRNTILAT) are Cytoplasmic-facing. A helical membrane pass occupies residues 485-505 (AIPFIVSSLLIACAVNVAMVL). Residues 506-508 (AGR) are Extracellular-facing. The chain crosses the membrane as a helical span at residues 509–529 (FLAGFCVGIASLSLPVYLGET). Residues 530–535 (VQPEVR) lie on the Cytoplasmic side of the membrane. The helical transmembrane segment at 536–556 (GTLGLLPTAFGNIGILLCFVA) threads the bilayer. The Extracellular portion of the chain corresponds to 557 to 563 (GTYMDWS). Residues 564-584 (MLAFLGAALPVPFLILMFLIP) traverse the membrane as a helical segment. Topologically, residues 585–653 (ETPRWFVSRG…NLKPLSISLG (69 aa)) are cytoplasmic. Residues 654–674 (LMFFQQLSGINAVIFYTVSIF) traverse the membrane as a helical segment. At 675 to 684 (KDAGSTIDGN) the chain is on the extracellular side. A helical transmembrane segment spans residues 685 to 705 (LCTIIVGIVNFMATFIATLLI). Residues 706 to 711 (DRAGRK) are Cytoplasmic-facing. The chain crosses the membrane as a helical span at residues 712–732 (ILLYVSNIAMIITLFVLGGFF). The Extracellular segment spans residues 733–751 (YCKSHGQDVSQLGWLPLSC). The chain crosses the membrane as a helical span at residues 752–772 (FVIYILGFSLGFGPIPWLMMG). Over 773 to 778 (EILPSK) the chain is Cytoplasmic. A helical membrane pass occupies residues 779–799 (IRGSAASVATAFNWSCTFVVT). The Extracellular segment spans residues 800–812 (KTFQDMIDFMGAH). The chain crosses the membrane as a helical span at residues 813-833 (GAFWLFGSICFIGLFFVILYV). Over 834-868 (PETQGKTLEDIERKMMGRVRRMSSVANMKPLAFNM) the chain is Cytoplasmic. 2 positions are modified to phosphoserine: serine 856 and serine 857.

This sequence belongs to the major facilitator superfamily. Sugar transporter (TC 2.A.1.1) family. Trehalose transporter subfamily.

The protein localises to the cell membrane. In terms of biological role, low-capacity facilitative transporter for trehalose. Does not transport maltose, sucrose or lactose. Mediates the bidirectional transfer of trehalose. Responsible for the transport of trehalose synthesized in the fat body and the incorporation of trehalose into other tissues that require a carbon source, thereby regulating trehalose levels in the hemolymph. This chain is Facilitated trehalose transporter Tret1, found in Drosophila pseudoobscura pseudoobscura (Fruit fly).